The following is a 205-amino-acid chain: Protein phosphatase inhibitor 2 family member B (205 aa).

A disordered region spans residues 1 to 44 (MAASTASHRPIKGILKNKTSTTSSMVASAEQPRRSVDEELSKKS). Residue alanine 2 is modified to N-acetylalanine. 2 required for binding PPP1CC regions span residues 12 to 17 (KGILKN) and 43 to 55 (KSQKWDEINILAT). Polar residues predominate over residues 17–26 (NKTSTTSSMV). The segment covering 31-44 (QPRRSVDEELSKKS) has biased composition (basic and acidic residues). Serine 44 is modified (phosphoserine). 2 positions are modified to phosphothreonine: threonine 89 and threonine 92. Residues 111–142 (EPKYRIQEQESSGEEDSDLSPEEREKKRQFEM) are disordered. 4 positions are modified to phosphoserine: serine 121, serine 122, serine 127, and serine 130. The span at 121 to 130 (SSGEEDSDLS) shows a compositional bias: acidic residues. The span at 131-142 (PEEREKKRQFEM) shows a compositional bias: basic and acidic residues. The interval 147-150 (HYNE) is required for binding PPP1CC catalytic center, displacing metal ions and inhibition of PPP1CC catalytic activity. Residues 163–205 (KDLHDDDEDEEMLETADGESMNTEESNQGSTPSDQQQNKLRSS) are disordered. Positions 167-179 (DDDEDEEMLETAD) are enriched in acidic residues. A compositionally biased stretch (polar residues) spans 182-205 (SMNTEESNQGSTPSDQQQNKLRSS).

This sequence belongs to the protein phosphatase inhibitor 2 family. As to quaternary structure, interacts with PPP1CC. As to expression, only detected in spermatozoa, both heads and tails.

In terms of biological role, inhibitor of protein-phosphatase 1. The chain is Protein phosphatase inhibitor 2 family member B from Homo sapiens (Human).